The chain runs to 99 residues: Fetal and adult testis-expressed transcript protein homolog (99 aa).

A helical membrane pass occupies residues Ala79–His98.

Interacts with BIK and RNF183. Interacts with IMMT/MIC60and EMD.

The protein localises to the mitochondrion. The protein resides in the mitochondrion outer membrane. It localises to the endoplasmic reticulum membrane. In terms of biological role, involved in the regulation of endoplasmic reticulum (ER)-mitochondria coupling. Negatively regulates the ER-mitochondria distance and Ca(2+) transfer from ER to mitochondria possibly implicating it in the regulation of apoptosis. May collaborate with RNF183 to restrain BIK protein levels thus regulating apoptotic signaling. The chain is Fetal and adult testis-expressed transcript protein homolog (Fate1) from Mus musculus (Mouse).